The following is a 368-amino-acid chain: MALLSDLINLDLSGRTGKIIAEYIWVGGSGMDVRSKARTLSGPVDDPSKLPKWNFDGSSTGQAPGDDSEVILCPRAIFRDPFRKGQNILVMCDCYEPNGEPIPSNKRHGAAKIFSHPDVKAEEPWFGIEQEYTLLQKDTKWPLGWPLAYPGPQGPYYCAAGADKSYGRDIVDCAYKACLYAGIDISGINGEVMPGQWEFQVAPAVGVSAGDQLWVARYILERITEIAGVVVSFDPKPIPGDWNGAGAHTNYSTKSMRSDGGYEVIKKAIGKLGLRHREHIAAYGDGNERPLTGRHETADINTFVWGVPNRGASVRVGRDTEKEGKGYFEDRRPASNMDPYVVTCLIAETTMLWEPSHSNGDGKGAAAP.

The region spanning 19-99 (IIAEYIWVGG…VMCDCYEPNG (81 aa)) is the GS beta-grasp domain. Positions 38–66 (RTLSGPVDDPSKLPKWNFDGSSTGQAPGD) are disordered. Positions 106–368 (KRHGAAKIFS…NGDGKGAAAP (263 aa)) constitute a GS catalytic domain.

It belongs to the glutamine synthetase family. Homooctamer. Found mainly in the vascular tissues of seedling roots.

The protein localises to the cytoplasm. The catalysed reaction is L-glutamate + NH4(+) + ATP = L-glutamine + ADP + phosphate + H(+). In terms of biological role, plays a role in the flow of nitrogen into nitrogenous organic compounds. This Zea mays (Maize) protein is Glutamine synthetase root isozyme 2 (GLN2).